Here is a 172-residue protein sequence, read N- to C-terminus: ATP synthase subunit b (172 aa).

The chain crosses the membrane as a helical span at residues 18–38 (IVWSLIILVIVAVFFYKFFMP).

It belongs to the ATPase B chain family. F-type ATPases have 2 components, F(1) - the catalytic core - and F(0) - the membrane proton channel. F(1) has five subunits: alpha(3), beta(3), gamma(1), delta(1), epsilon(1). F(0) has three main subunits: a(1), b(2) and c(10-14). The alpha and beta chains form an alternating ring which encloses part of the gamma chain. F(1) is attached to F(0) by a central stalk formed by the gamma and epsilon chains, while a peripheral stalk is formed by the delta and b chains.

Its subcellular location is the cell membrane. In terms of biological role, f(1)F(0) ATP synthase produces ATP from ADP in the presence of a proton or sodium gradient. F-type ATPases consist of two structural domains, F(1) containing the extramembraneous catalytic core and F(0) containing the membrane proton channel, linked together by a central stalk and a peripheral stalk. During catalysis, ATP synthesis in the catalytic domain of F(1) is coupled via a rotary mechanism of the central stalk subunits to proton translocation. Its function is as follows. Component of the F(0) channel, it forms part of the peripheral stalk, linking F(1) to F(0). In Bifidobacterium longum (strain DJO10A), this protein is ATP synthase subunit b.